The primary structure comprises 214 residues: tRNA (guanine-N(7)-)-methyltransferase (214 aa).

Glutamate 44, glutamate 69, aspartate 96, and aspartate 118 together coordinate S-adenosyl-L-methionine. The active site involves aspartate 118. Substrate contacts are provided by residues lysine 122, aspartate 154, and 191-194 (TEYE).

Belongs to the class I-like SAM-binding methyltransferase superfamily. TrmB family.

It carries out the reaction guanosine(46) in tRNA + S-adenosyl-L-methionine = N(7)-methylguanosine(46) in tRNA + S-adenosyl-L-homocysteine. Its pathway is tRNA modification; N(7)-methylguanine-tRNA biosynthesis. In terms of biological role, catalyzes the formation of N(7)-methylguanine at position 46 (m7G46) in tRNA. The chain is tRNA (guanine-N(7)-)-methyltransferase from Listeria monocytogenes serotype 4a (strain HCC23).